Consider the following 911-residue polypeptide: DNA mismatch repair protein MutS (911 aa).

660-667 (GPNMAGKS) serves as a coordination point for ATP.

The protein belongs to the DNA mismatch repair MutS family.

Its function is as follows. This protein is involved in the repair of mismatches in DNA. It is possible that it carries out the mismatch recognition step. This protein has a weak ATPase activity. The chain is DNA mismatch repair protein MutS from Rhodopseudomonas palustris (strain HaA2).